A 468-amino-acid polypeptide reads, in one-letter code: Tapasin-related protein (468 aa).

A signal peptide spans 1–18; the sequence is MGTQEGWCLLLCLALSGA. At 19–405 the chain is on the lumenal side; sequence AETKPHPAER…STQVVPPERR (387 aa). Positions 181–297 constitute an Ig-like V-type domain; that stretch reads PQGTVRTAVE…SLYRAQQIIQ (117 aa). 2 disulfides stabilise this stretch: Cys-212/Cys-283 and Cys-321/Cys-382. Residue Asn-265 is glycosylated (N-linked (GlcNAc...) asparagine). The region spanning 304–394 is the Ig-like C1-type domain; sequence PKVRLSLANE…MHISLEEPLG (91 aa). Residues 406–426 traverse the membrane as a helical segment; that stretch reads TALGVIFASSLFLLALLFLGL. The Cytoplasmic segment spans residues 427 to 468; that stretch reads QRRQAPTRVGLLQAERWKTTSCADTQSSHLHEDRTACVSQPS.

Interacts with peptide-free HLA-A*02-B2M complexes or those loaded with low affinity peptides, likely facilitating peptide exchange onto higher affinity peptides. Interacts with MR1 in a ligand-independent way; this interaction may stabilize MR1 pool and facilitate ligand loading and dissociation.

The protein resides in the cell membrane. Its subcellular location is the endoplasmic reticulum membrane. It is found in the microsome membrane. It localises to the golgi apparatus membrane. Its function is as follows. Component of the antigen processing and presentation pathway, which binds to MHC class I coupled with beta2-microglobulin/B2M. Association between TAPBPR and MHC class I occurs in the absence of a functional peptide-loading complex (PLC). Expression seems to slow down and down-regulate MHC class I surface expression. The protein is Tapasin-related protein (TAPBPL) of Pongo abelii (Sumatran orangutan).